Here is a 34-residue protein sequence, read N- to C-terminus: Thermomycolin (34 aa).

The Charge relay system role is filled by Ser-33.

The protein belongs to the peptidase S8 family.

The protein resides in the secreted. The enzyme catalyses Rather non-specific hydrolysis of proteins. Preferential cleavage: -Ala-|-Xaa-, -Tyr-|-Xaa-, -Phe-|-Xaa- in small molecular substrates.. Functionally, this is an extracellular proteinase with a general specificity for apolar residues. The polypeptide is Thermomycolin (Malbranchea cinnamomea (Thermophilic fungus)).